The sequence spans 403 residues: TBC1 domain family member 20 (403 aa).

A disordered region spans residues 1 to 25; sequence MALRSAQGDGPTSGHWDGGAEKADF. Residues 60 to 246 form the Rab-GAP TBC domain; it reads LLTDEIRRKV…RLYDFFLACH (187 aa). Transmembrane regions (helical) follow at residues 238–258 and 367–387; these read LYDFFLACHPLMPIYFAAVIV and FVKLAVMGLTVALGAAALAVV.

As to quaternary structure, (Microbial infection) Directly interacts with the N-terminal amphipathic helix of hepatitis C virus (HCV) NS5A.

The protein resides in the membrane. Functionally, GTPase-activating protein (GAP) specific for Rab1 and Rab2 small GTPase families for which it can accelerate the intrinsic GTP hydrolysis rate by more than five orders of magnitude. Also shows GAP activity for RAB18 GTPase. Promotes RAB18 dissociation from the endoplasmic reticulum (ER) membrane into the cytosol, probably through stimulating RAB18 GTP-hydrolysis. Involved in maintaining endoplasmic reticulum structure. The chain is TBC1 domain family member 20 from Homo sapiens (Human).